Consider the following 128-residue polypeptide: UPF0325 protein KPN78578_01770 (128 aa).

The protein belongs to the UPF0325 family.

In Klebsiella pneumoniae subsp. pneumoniae (strain ATCC 700721 / MGH 78578), this protein is UPF0325 protein KPN78578_01770.